The chain runs to 342 residues: Methylthioribose-1-phosphate isomerase (342 aa).

Substrate contacts are provided by residues 49-51 (RGA), arginine 86, and glutamine 187. The active-site Proton donor is aspartate 228. 238-239 (NK) provides a ligand contact to substrate.

It belongs to the eIF-2B alpha/beta/delta subunits family. MtnA subfamily.

It catalyses the reaction 5-(methylsulfanyl)-alpha-D-ribose 1-phosphate = 5-(methylsulfanyl)-D-ribulose 1-phosphate. It participates in amino-acid biosynthesis; L-methionine biosynthesis via salvage pathway; L-methionine from S-methyl-5-thio-alpha-D-ribose 1-phosphate: step 1/6. Its function is as follows. Catalyzes the interconversion of methylthioribose-1-phosphate (MTR-1-P) into methylthioribulose-1-phosphate (MTRu-1-P). The sequence is that of Methylthioribose-1-phosphate isomerase from Klebsiella pneumoniae subsp. pneumoniae (strain ATCC 700721 / MGH 78578).